The sequence spans 390 residues: UPF0229 protein Cbei_0567 (390 aa).

Residues 77 to 108 (SGVGNEKRGEKLGNGNKKLAKGNQGAGNEEGD) are disordered. Positions 89 to 103 (GNGNKKLAKGNQGAG) are enriched in low complexity.

Belongs to the UPF0229 family.

The sequence is that of UPF0229 protein Cbei_0567 from Clostridium beijerinckii (strain ATCC 51743 / NCIMB 8052) (Clostridium acetobutylicum).